A 474-amino-acid polypeptide reads, in one-letter code: Coiled-coil domain-containing protein 6 (474 aa).

Acidic residues predominate over residues 1–10 (MADSASESDT). The disordered stretch occupies residues 1–47 (MADSASESDTDGAGGNSSSSAAMQSSCSSTSGGGGGGGGGGGGGKSG). Alanine 2 carries the post-translational modification N-acetylalanine. A compositionally biased stretch (low complexity) spans 16–30 (NSSSSAAMQSSCSST). Over residues 31–47 (SGGGGGGGGGGGGGKSG) the composition is skewed to gly residues. Serine 52 carries the phosphoserine modification. The stretch at 53 to 237 (PFRLEELTNR…KRILQEKLDQ (185 aa)) forms a coiled coil. 3 tandem repeats follow at residues 106–134 (EQEE…AVNY), 135–163 (EKEE…EQHL), and 164–192 (EQEQ…QLTL). The segment at 106 to 235 (EQEEEFISNT…AEKRILQEKL (130 aa)) is 5 X 29 AA tandem repeats. The stretch at 193 to 206 (EQLRREKIDLENTL) is one 4; approximate repeat. Repeat unit 5 spans residues 207 to 235 (EQEQEALVNRLWKRMDKLEAEKRILQEKL). A phosphoserine mark is found at serine 240, serine 244, serine 249, serine 254, serine 284, and serine 323. A coiled-coil region spans residues 253 to 332 (DSPENMMRHI…SESESSLEMD (80 aa)). Residues 342–369 (AQGLRPRTVSSPIPYTPSPSSSRPISPG) are disordered. Threonine 349 bears the Phosphothreonine mark. The segment covering 351-368 (SSPIPYTPSPSSSRPISP) has biased composition (low complexity). Phosphoserine occurs at positions 363 and 367. The residue at position 387 (arginine 387) is an Omega-N-methylarginine. 2 positions are modified to phosphoserine: serine 395 and serine 413. The interval 397 to 474 (GLHVQHMGTS…QHSAHPSSQP (78 aa)) is disordered. Residues 426 to 451 (PTPPPSPNTQTPVQPPPPPPPPPMQP) show a composition bias toward pro residues. The SH3-binding signature appears at 442 to 451 (PPPPPPPMQP). A compositionally biased stretch (low complexity) spans 459–474 (SQPTPSQHSAHPSSQP).

Ubiquitously expressed.

The protein resides in the cytoplasm. It is found in the cytoskeleton. This is Coiled-coil domain-containing protein 6 (CCDC6) from Homo sapiens (Human).